Reading from the N-terminus, the 310-residue chain is Nuclear hormone receptor family member nhr-89 (310 aa).

The nuclear receptor DNA-binding region spans 5–79 (EGPCRVCHSV…SGMRRDCVRK (75 aa)). NR C4-type zinc fingers lie at residues 8-29 (CRVC…CMSC) and 43-67 (CPAN…YNKC). Residues 101–310 (KLSESYEELL…TLHQKYQIPF (210 aa)) enclose the NR LBD domain.

Belongs to the nuclear hormone receptor family.

Its subcellular location is the nucleus. Functionally, orphan nuclear receptor. The sequence is that of Nuclear hormone receptor family member nhr-89 (nhr-89) from Caenorhabditis elegans.